We begin with the raw amino-acid sequence, 115 residues long: Large ribosomal subunit protein bL19 (115 aa).

It belongs to the bacterial ribosomal protein bL19 family.

In terms of biological role, this protein is located at the 30S-50S ribosomal subunit interface and may play a role in the structure and function of the aminoacyl-tRNA binding site. The chain is Large ribosomal subunit protein bL19 from Latilactobacillus sakei subsp. sakei (strain 23K) (Lactobacillus sakei subsp. sakei).